The primary structure comprises 486 residues: ATP synthase subunit beta (486 aa).

164-171 (GGAGVGKT) contacts ATP.

This sequence belongs to the ATPase alpha/beta chains family. In terms of assembly, F-type ATPases have 2 components, CF(1) - the catalytic core - and CF(0) - the membrane proton channel. CF(1) has five subunits: alpha(3), beta(3), gamma(1), delta(1), epsilon(1). CF(0) has four main subunits: a(1), b(1), b'(1) and c(9-12).

It is found in the cellular thylakoid membrane. It carries out the reaction ATP + H2O + 4 H(+)(in) = ADP + phosphate + 5 H(+)(out). In terms of biological role, produces ATP from ADP in the presence of a proton gradient across the membrane. The catalytic sites are hosted primarily by the beta subunits. This chain is ATP synthase subunit beta, found in Prochlorococcus marinus (strain MIT 9301).